The sequence spans 185 residues: Acireductone dioxygenase (185 aa).

4 residues coordinate Fe(2+): H96, H98, E102, and H140. Residues H96, H98, E102, and H140 each contribute to the Ni(2+) site.

The protein belongs to the acireductone dioxygenase (ARD) family. In terms of assembly, monomer. Fe(2+) serves as cofactor. It depends on Ni(2+) as a cofactor.

The enzyme catalyses 1,2-dihydroxy-5-(methylsulfanyl)pent-1-en-3-one + O2 = 3-(methylsulfanyl)propanoate + CO + formate + 2 H(+). It carries out the reaction 1,2-dihydroxy-5-(methylsulfanyl)pent-1-en-3-one + O2 = 4-methylsulfanyl-2-oxobutanoate + formate + 2 H(+). Its pathway is amino-acid biosynthesis; L-methionine biosynthesis via salvage pathway; L-methionine from S-methyl-5-thio-alpha-D-ribose 1-phosphate: step 5/6. Catalyzes 2 different reactions between oxygen and the acireductone 1,2-dihydroxy-3-keto-5-methylthiopentene (DHK-MTPene) depending upon the metal bound in the active site. Fe-containing acireductone dioxygenase (Fe-ARD) produces formate and 2-keto-4-methylthiobutyrate (KMTB), the alpha-ketoacid precursor of methionine in the methionine recycle pathway. Ni-containing acireductone dioxygenase (Ni-ARD) produces methylthiopropionate, carbon monoxide and formate, and does not lie on the methionine recycle pathway. The chain is Acireductone dioxygenase from Hahella chejuensis (strain KCTC 2396).